Consider the following 334-residue polypeptide: Probable fructose-bisphosphate aldolase class 1 (334 aa).

The protein belongs to the class I fructose-bisphosphate aldolase family.

It carries out the reaction beta-D-fructose 1,6-bisphosphate = D-glyceraldehyde 3-phosphate + dihydroxyacetone phosphate. Its pathway is carbohydrate degradation; glycolysis; D-glyceraldehyde 3-phosphate and glycerone phosphate from D-glucose: step 4/4. The chain is Probable fructose-bisphosphate aldolase class 1 from Xylella fastidiosa (strain Temecula1 / ATCC 700964).